The chain runs to 292 residues: Histamine N-methyltransferase (292 aa).

Glutamate 28 provides a ligand contact to substrate. Glycine 60, glutamate 89, glutamine 94, serine 120, and isoleucine 142 together coordinate S-adenosyl-L-methionine. Asparagine 283 lines the substrate pocket.

The protein belongs to the class I-like SAM-binding methyltransferase superfamily. HNMT family. As to quaternary structure, monomer.

It is found in the cytoplasm. It catalyses the reaction histamine + S-adenosyl-L-methionine = N(tau)-methylhistamine + S-adenosyl-L-homocysteine + H(+). Inactivates histamine by N-methylation. Plays an important role in degrading histamine and in regulating the airway response to histamine. This is Histamine N-methyltransferase (HNMT) from Pongo abelii (Sumatran orangutan).